Reading from the N-terminus, the 496-residue chain is Cytochrome P450 71B14 (496 aa).

The helical transmembrane segment at 1–21 (MIWWFIVGASFFFAFILIAKD) threads the bilayer. Cys-436 is a heme binding site.

This sequence belongs to the cytochrome P450 family. Heme is required as a cofactor.

It is found in the membrane. In Arabidopsis thaliana (Mouse-ear cress), this protein is Cytochrome P450 71B14 (CYP71B14).